We begin with the raw amino-acid sequence, 215 residues long: Cytochrome b6 (215 aa).

A helical transmembrane segment spans residues 32 to 52; the sequence is VFYCFGGMTLTCFLVQLATGF. Cys35 contacts heme c. Heme b is bound by residues His86 and His100. The next 3 helical transmembrane spans lie at 90–110, 116–136, and 186–206; these read ASMMVLMMILHIFRVYLTGGF, LTWITGVILAVLTVSFGVTGY, and LHTLFLPALSVIFLLAHFLMI. Residues His187 and His202 each coordinate heme b.

It belongs to the cytochrome b family. PetB subfamily. The 4 large subunits of the cytochrome b6-f complex are cytochrome b6, subunit IV (17 kDa polypeptide, PetD), cytochrome f and the Rieske protein, while the 4 small subunits are PetG, PetL, PetM and PetN. The complex functions as a dimer. The cofactor is heme b. Requires heme c as cofactor.

It is found in the plastid. The protein localises to the chloroplast thylakoid membrane. Component of the cytochrome b6-f complex, which mediates electron transfer between photosystem II (PSII) and photosystem I (PSI), cyclic electron flow around PSI, and state transitions. This chain is Cytochrome b6, found in Cyanidium caldarium (Red alga).